The following is a 208-amino-acid chain: Inosine triphosphate pyrophosphatase (208 aa).

Position 2 is an N-acetylalanine (Ala2). Residue 14-19 coordinates ITP; it reads TGNAKK. Glu44 provides a ligand contact to Mg(2+). ITP contacts are provided by residues Lys56, 72–73, Lys89, 149–152, Lys172, and 177–178; these read DT, FGWD, and HR.

Belongs to the HAM1 NTPase family. In terms of assembly, homodimer. Mg(2+) is required as a cofactor. Mn(2+) serves as cofactor.

The protein localises to the cytoplasm. It catalyses the reaction ITP + H2O = IMP + diphosphate + H(+). The catalysed reaction is dITP + H2O = dIMP + diphosphate + H(+). It carries out the reaction XTP + H2O = XMP + diphosphate + H(+). The enzyme catalyses N(6)-hydroxy-dATP + H2O = N(6)-hydroxy-dAMP + diphosphate + H(+). In terms of biological role, pyrophosphatase that hydrolyzes the non-canonical purine nucleotides inosine triphosphate (ITP), deoxyinosine triphosphate (dITP) as well as 2'-deoxy-N-6-hydroxylaminopurine triphosphate (dHAPTP) and xanthosine 5'-triphosphate (XTP) to their respective monophosphate derivatives. The enzyme does not distinguish between the deoxy- and ribose forms. Probably excludes non-canonical purines from RNA and DNA precursor pools, thus preventing their incorporation into RNA and DNA and avoiding chromosomal lesions. The protein is Inosine triphosphate pyrophosphatase of Bos taurus (Bovine).